Here is a 343-residue protein sequence, read N- to C-terminus: MAKTLDKSKKRKLVKSKSTNFDKKQKINKQQQQPESSTPYSSSSSSSDSSDSESDNEFDPEELRELLQPYSKDQLVDLVCSASRIGSSIYSAVVEAADRDVTHRKIFVYGLPWETTRETLVGVFEGYGEIEECTVVIDKATGKAKGFGFVMFKTRKGAKEALKEPKKRILNRTATCQLASMGPAASGKGHDQPGPVKISMGSMANHGQPQQQQVQGQHVFNGGGMAASPFMLGNQYHPLYGAGMLGNPALAAAAAAGGGYMYPMLAGALAHGGLGSDMVQSSQMGGIGVDPSVGAAGLSALGSYFRGQSLPSTYPDSDAGGKRGTGKDSDAGGSSFHGYSNYS.

The disordered stretch occupies residues 1–61 (MAKTLDKSKK…SESDNEFDPE (61 aa)). A compositionally biased stretch (low complexity) spans 28 to 49 (NKQQQQPESSTPYSSSSSSSDS). Positions 50–61 (SDSESDNEFDPE) are enriched in acidic residues. In terms of domain architecture, RRM spans 104–181 (RKIFVYGLPW…RTATCQLASM (78 aa)). Positions 312-343 (STYPDSDAGGKRGTGKDSDAGGSSFHGYSNYS) are disordered. Over residues 319 to 330 (AGGKRGTGKDSD) the composition is skewed to basic and acidic residues.

As to quaternary structure, interacts with UBA1A, UBA2A, UBP1A, UBP1B and UBP1C.

The protein localises to the nucleus. Functionally, acts as a component of a complex regulating the turnover of mRNAs in the nucleus. Binds with high affinity to RNA molecules that contain U-rich sequences in 3'-UTRs. May function in complex with UBP1 and contribute to the stabilization of mRNAs in the nucleus. However, unlike UBP1, UBA1A does not stimulate pre-mRNA splicing. In Arabidopsis thaliana (Mouse-ear cress), this protein is UBP1-associated proteins 1A (UBA1A).